The sequence spans 611 residues: Dihydroxy-acid dehydratase (611 aa).

Asp81 contacts Mg(2+). Cys122 serves as a coordination point for [2Fe-2S] cluster. Mg(2+) contacts are provided by Asp123 and Lys124. Lys124 bears the N6-carboxylysine mark. Cys195 contacts [2Fe-2S] cluster. Glu491 is a Mg(2+) binding site. Residue Ser517 is the Proton acceptor of the active site.

It belongs to the IlvD/Edd family. In terms of assembly, homodimer. It depends on [2Fe-2S] cluster as a cofactor. Requires Mg(2+) as cofactor.

It catalyses the reaction (2R)-2,3-dihydroxy-3-methylbutanoate = 3-methyl-2-oxobutanoate + H2O. The catalysed reaction is (2R,3R)-2,3-dihydroxy-3-methylpentanoate = (S)-3-methyl-2-oxopentanoate + H2O. Its pathway is amino-acid biosynthesis; L-isoleucine biosynthesis; L-isoleucine from 2-oxobutanoate: step 3/4. It functions in the pathway amino-acid biosynthesis; L-valine biosynthesis; L-valine from pyruvate: step 3/4. Functions in the biosynthesis of branched-chain amino acids. Catalyzes the dehydration of (2R,3R)-2,3-dihydroxy-3-methylpentanoate (2,3-dihydroxy-3-methylvalerate) into 2-oxo-3-methylpentanoate (2-oxo-3-methylvalerate) and of (2R)-2,3-dihydroxy-3-methylbutanoate (2,3-dihydroxyisovalerate) into 2-oxo-3-methylbutanoate (2-oxoisovalerate), the penultimate precursor to L-isoleucine and L-valine, respectively. The protein is Dihydroxy-acid dehydratase of Brucella abortus (strain S19).